The chain runs to 651 residues: Probable ATP-dependent helicase MJ0942 (651 aa).

The 250-residue stretch at 6 to 255 (YIKEKFPYPK…EIIEKYLTSR (250 aa)) folds into the Helicase ATP-binding domain. Residue 41–48 (APTGVGKT) participates in ATP binding. Cys102, Cys149, and Cys154 together coordinate [4Fe-4S] cluster. The short motif at 195 to 198 (DEAH) is the DEAH box element. A Helicase C-terminal domain is found at 449–638 (NLLKILEAIN…NYEVMSLDMA (190 aa)).

The protein belongs to the helicase family. DinG subfamily. It depends on [4Fe-4S] cluster as a cofactor.

It carries out the reaction Couples ATP hydrolysis with the unwinding of duplex DNA at the replication fork by translocating in the 5'-3' direction. This creates two antiparallel DNA single strands (ssDNA). The leading ssDNA polymer is the template for DNA polymerase III holoenzyme which synthesizes a continuous strand.. It catalyses the reaction ATP + H2O = ADP + phosphate + H(+). Might be a 5'-3' DNA helicase. The polypeptide is Probable ATP-dependent helicase MJ0942 (Methanocaldococcus jannaschii (strain ATCC 43067 / DSM 2661 / JAL-1 / JCM 10045 / NBRC 100440) (Methanococcus jannaschii)).